We begin with the raw amino-acid sequence, 157 residues long: Transcription elongation factor GreA (157 aa).

Positions 1–75 form a coiled coil; the sequence is MSKEIILTQE…VETLINRAKV (75 aa).

It belongs to the GreA/GreB family.

Necessary for efficient RNA polymerase transcription elongation past template-encoded arresting sites. The arresting sites in DNA have the property of trapping a certain fraction of elongating RNA polymerases that pass through, resulting in locked ternary complexes. Cleavage of the nascent transcript by cleavage factors such as GreA or GreB allows the resumption of elongation from the new 3'terminus. GreA releases sequences of 2 to 3 nucleotides. This Mycoplasma capricolum subsp. capricolum (strain California kid / ATCC 27343 / NCTC 10154) protein is Transcription elongation factor GreA.